A 264-amino-acid polypeptide reads, in one-letter code: S-adenosylmethionine decarboxylase proenzyme (264 aa).

The Schiff-base intermediate with substrate; via pyruvic acid role is filled by Ser-112. Ser-112 is subject to Pyruvic acid (Ser); by autocatalysis. Residue His-117 is the Proton acceptor; for processing activity of the active site. The Proton donor; for catalytic activity role is filled by Cys-140.

Belongs to the prokaryotic AdoMetDC family. Type 2 subfamily. Heterooctamer of four alpha and four beta chains arranged as a tetramer of alpha/beta heterodimers. Pyruvate serves as cofactor. In terms of processing, is synthesized initially as an inactive proenzyme. Formation of the active enzyme involves a self-maturation process in which the active site pyruvoyl group is generated from an internal serine residue via an autocatalytic post-translational modification. Two non-identical subunits are generated from the proenzyme in this reaction, and the pyruvate is formed at the N-terminus of the alpha chain, which is derived from the carboxyl end of the proenzyme. The post-translation cleavage follows an unusual pathway, termed non-hydrolytic serinolysis, in which the side chain hydroxyl group of the serine supplies its oxygen atom to form the C-terminus of the beta chain, while the remainder of the serine residue undergoes an oxidative deamination to produce ammonia and the pyruvoyl group blocking the N-terminus of the alpha chain.

The enzyme catalyses S-adenosyl-L-methionine + H(+) = S-adenosyl 3-(methylsulfanyl)propylamine + CO2. It participates in amine and polyamine biosynthesis; S-adenosylmethioninamine biosynthesis; S-adenosylmethioninamine from S-adenosyl-L-methionine: step 1/1. In terms of biological role, catalyzes the decarboxylation of S-adenosylmethionine to S-adenosylmethioninamine (dcAdoMet), the propylamine donor required for the synthesis of the polyamines spermine and spermidine from the diamine putrescine. This is S-adenosylmethionine decarboxylase proenzyme from Escherichia coli O127:H6 (strain E2348/69 / EPEC).